We begin with the raw amino-acid sequence, 1159 residues long: ATP-dependent helicase/deoxyribonuclease subunit B (1159 aa).

One can recognise a UvrD-like helicase ATP-binding domain in the interval 1–275 (MEFNTYIGRA…TYFNTFYRYN (275 aa)). Residue 8–15 (GRAGTGKS) coordinates ATP. Positions 269–583 (NTFYRYNNDD…SIGTMDLAKV (315 aa)) constitute a UvrD-like helicase C-terminal domain. Residues cysteine 784, cysteine 1112, cysteine 1115, and cysteine 1121 each coordinate [4Fe-4S] cluster.

It belongs to the helicase family. AddB/RexB type 1 subfamily. Heterodimer of AddA and AddB. Mg(2+) serves as cofactor. The cofactor is [4Fe-4S] cluster.

Its function is as follows. The heterodimer acts as both an ATP-dependent DNA helicase and an ATP-dependent, dual-direction single-stranded exonuclease. Recognizes the chi site generating a DNA molecule suitable for the initiation of homologous recombination. The AddB subunit has 5' -&gt; 3' nuclease activity but not helicase activity. This Staphylococcus epidermidis (strain ATCC 35984 / DSM 28319 / BCRC 17069 / CCUG 31568 / BM 3577 / RP62A) protein is ATP-dependent helicase/deoxyribonuclease subunit B.